A 226-amino-acid chain; its full sequence is Prolactin (226 aa).

Residues Met-1–Pro-29 form the signal peptide. Cys-33 and Cys-38 form a disulfide bridge. A phosphoserine mark is found at Ser-53 and Ser-117. Cystine bridges form between Cys-85–Cys-201 and Cys-218–Cys-226.

Belongs to the somatotropin/prolactin family. As to quaternary structure, interacts with PRLR.

The protein localises to the secreted. Its function is as follows. Prolactin acts primarily on the mammary gland by promoting lactation. This Mus musculus (Mouse) protein is Prolactin (Prl).